A 277-amino-acid chain; its full sequence is Thiazole synthase (277 aa).

Residue Lys107 is the Schiff-base intermediate with DXP of the active site. 1-deoxy-D-xylulose 5-phosphate-binding positions include Gly168, 194-195 (AG), and 216-217 (AS).

The protein belongs to the ThiG family. As to quaternary structure, homotetramer. Forms heterodimers with either ThiH or ThiS.

The protein localises to the cytoplasm. It catalyses the reaction [ThiS sulfur-carrier protein]-C-terminal-Gly-aminoethanethioate + 2-iminoacetate + 1-deoxy-D-xylulose 5-phosphate = [ThiS sulfur-carrier protein]-C-terminal Gly-Gly + 2-[(2R,5Z)-2-carboxy-4-methylthiazol-5(2H)-ylidene]ethyl phosphate + 2 H2O + H(+). Its pathway is cofactor biosynthesis; thiamine diphosphate biosynthesis. Catalyzes the rearrangement of 1-deoxy-D-xylulose 5-phosphate (DXP) to produce the thiazole phosphate moiety of thiamine. Sulfur is provided by the thiocarboxylate moiety of the carrier protein ThiS. In vitro, sulfur can be provided by H(2)S. This chain is Thiazole synthase, found in Cutibacterium acnes (strain DSM 16379 / KPA171202) (Propionibacterium acnes).